Consider the following 369-residue polypeptide: Aspartate-semialdehyde dehydrogenase (369 aa).

NADP(+) is bound by residues 11-14, 38-39, and Gln75; these read RGMV and TS. Arg104 is a phosphate binding site. Residue Cys137 is the Acyl-thioester intermediate of the active site. Gln164 is a substrate binding site. NADP(+)-binding positions include 167–168 and Pro195; that span reads SG. Glu243 contributes to the substrate binding site. Position 246 (Lys246) interacts with phosphate. Arg269 lines the substrate pocket. His276 acts as the Proton acceptor in catalysis. Position 352 (Gln352) interacts with NADP(+).

The protein belongs to the aspartate-semialdehyde dehydrogenase family. In terms of assembly, homodimer.

The catalysed reaction is L-aspartate 4-semialdehyde + phosphate + NADP(+) = 4-phospho-L-aspartate + NADPH + H(+). The protein operates within amino-acid biosynthesis; L-lysine biosynthesis via DAP pathway; (S)-tetrahydrodipicolinate from L-aspartate: step 2/4. It functions in the pathway amino-acid biosynthesis; L-methionine biosynthesis via de novo pathway; L-homoserine from L-aspartate: step 2/3. It participates in amino-acid biosynthesis; L-threonine biosynthesis; L-threonine from L-aspartate: step 2/5. Its function is as follows. Catalyzes the NADPH-dependent formation of L-aspartate-semialdehyde (L-ASA) by the reductive dephosphorylation of L-aspartyl-4-phosphate. In Buchnera aphidicola subsp. Baizongia pistaciae (strain Bp), this protein is Aspartate-semialdehyde dehydrogenase.